The primary structure comprises 1177 residues: Zinc finger CCCH domain-containing protein 6 (1177 aa).

The segment covering 1 to 12 (MTDSEHAGHDRE) has biased composition (basic and acidic residues). Disordered stretches follow at residues 1–137 (MTDS…SKEY) and 179–206 (QESS…TEYR). Positions 13–31 (DGELEDGEIDDAGFEETQD) are enriched in acidic residues. Residues 27-73 (EETQDQEAKENEKQKNEKAYRKSRKKHKKEREKKKSKRRKHEKHKHN) are a coiled coil. The segment covering 32–46 (QEAKENEKQKNEKAY) has biased composition (basic and acidic residues). The segment covering 47–73 (RKSRKKHKKEREKKKSKRRKHEKHKHN) has biased composition (basic residues). Low complexity predominate over residues 179 to 188 (QESSGSSFSK). C3H1-type zinc fingers lie at residues 271–297 (KGKQ…HDAE), 299–326 (EKKK…HSEF), and 327–350 (PCKF…HDDL). Residues 347–383 (HDDLTKETRKLLDKVLNADEELVNEDERELEELRKRG) adopt a coiled-coil conformation. 8 disordered regions span residues 383–416 (GITP…FETD), 446–587 (PPAF…ESMQ), 622–654 (QQQP…SASG), 670–767 (RYQE…KKPH), 780–826 (PKKL…SERE), 942–988 (EQSG…SSRS), 1043–1101 (DPRD…PVDG), and 1132–1162 (LLRP…DKPL). Over residues 493–502 (HPGSPGHHPC) the composition is skewed to low complexity. 2 stretches are compositionally biased toward polar residues: residues 512–522 (ENPSLLPSSSE) and 564–587 (SSPA…ESMQ). Residues 713–728 (RTLQKQTGTLRNQQLP) show a composition bias toward polar residues. The segment covering 753–767 (PRLRTVPRQDIKKPH) has biased composition (basic and acidic residues). The span at 955 to 967 (GDPRLQKNFDPRL) shows a compositional bias: basic and acidic residues. Polar residues-rich tracts occupy residues 1050-1064 (LSAT…GENT) and 1077-1093 (KNQP…NTTA). Serine 1150 is subject to Phosphoserine.

The chain is Zinc finger CCCH domain-containing protein 6 (Zc3h6) from Mus musculus (Mouse).